Reading from the N-terminus, the 529-residue chain is 3-ketoacyl-CoA synthase 20 (529 aa).

Residues 1–22 (MSHNQNQPHRPVPVHVTNAEPN) form a disordered region. 2 consecutive transmembrane segments (helical) span residues 52 to 72 (LYILLLPLLAATIANLSSFTI) and 84 to 104 (FHFLSATLATALLISLSTAYF). The 294-residue stretch at 103–396 (YFTTRPRRVF…FFATLVARKV (294 aa)) folds into the FAE domain. Active-site residues include cysteine 247, histidine 326, histidine 415, histidine 419, and asparagine 452.

The protein belongs to the thiolase-like superfamily. Chalcone/stilbene synthases family. In terms of tissue distribution, expressed in aerial organs. Expressed in leaves, flowers, siliques and stems. Expressed in roots, young seedlings, leaves, flowers and siliques.

Its subcellular location is the membrane. It catalyses the reaction a very-long-chain acyl-CoA + malonyl-CoA + H(+) = a very-long-chain 3-oxoacyl-CoA + CO2 + CoA. It functions in the pathway lipid metabolism; fatty acid biosynthesis. Its activity is regulated as follows. Inhibited by K3 herbicides such as alachlor, allidochlor, anilofos, cafenstrole, fentrazamide and flufenacet. Strongly inhibited by metazachlor and only slightly by mefluidide. In terms of biological role, mediates the synthesis of VLCFAs from 22 to 26 carbons in length (e.g. C22, C24, C26). Functionally redundant with KCS2 in the two-carbon elongation of C22 fatty acids that is required for cuticular wax and root suberin biosynthesis. The chain is 3-ketoacyl-CoA synthase 20 from Arabidopsis thaliana (Mouse-ear cress).